Reading from the N-terminus, the 179-residue chain is Translation initiation factor IF-3 (179 aa).

The protein belongs to the IF-3 family. Monomer.

The protein localises to the cytoplasm. In terms of biological role, IF-3 binds to the 30S ribosomal subunit and shifts the equilibrium between 70S ribosomes and their 50S and 30S subunits in favor of the free subunits, thus enhancing the availability of 30S subunits on which protein synthesis initiation begins. This chain is Translation initiation factor IF-3, found in Leptospira borgpetersenii serovar Hardjo-bovis (strain L550).